The primary structure comprises 276 residues: Digeranylgeranylglyceryl phosphate synthase (276 aa).

Transmembrane regions (helical) follow at residues 14-34 (VNTLAAGALTFIGAFVAGGAV), 90-110 (VVLFVGAAALAATLPVLAVCI), 144-164 (FVFGAAAVGSPLAGGVLAALA), 200-220 (ALAVSAVFVVGAAAASPVPYL), and 221-241 (VGVFGWWYLVAVCPGVVVMVV).

It belongs to the UbiA prenyltransferase family. DGGGP synthase subfamily. Mg(2+) serves as cofactor.

The protein resides in the cell membrane. It catalyses the reaction sn-3-O-(geranylgeranyl)glycerol 1-phosphate + (2E,6E,10E)-geranylgeranyl diphosphate = 2,3-bis-O-(geranylgeranyl)-sn-glycerol 1-phosphate + diphosphate. It participates in membrane lipid metabolism; glycerophospholipid metabolism. Functionally, prenyltransferase that catalyzes the transfer of the geranylgeranyl moiety of geranylgeranyl diphosphate (GGPP) to the C2 hydroxyl of (S)-3-O-geranylgeranylglyceryl phosphate (GGGP). This reaction is the second ether-bond-formation step in the biosynthesis of archaeal membrane lipids. The polypeptide is Digeranylgeranylglyceryl phosphate synthase (Halobacterium salinarum (strain ATCC 29341 / DSM 671 / R1)).